A 192-amino-acid chain; its full sequence is MPIILGIDPGSRITGYGIIRQQGRQLEYLGSGAIRINASDLPSRLKHIYAGVTEIITQFQPDMFAIEQVFMAKNADSALKLGQARGTAIVAAVNHDLPVFEYAARLVKQTVTGIGSADKLQVQDMVTRMLQLSAKPQVDAADALAIAITHAHSIQHSLIVAKQNNPSITTHKEQILALMKTRYSRGRFRLKG.

Catalysis depends on residues aspartate 8, glutamate 67, and aspartate 139. Mg(2+) is bound by residues aspartate 8, glutamate 67, and aspartate 139.

The protein belongs to the RuvC family. Homodimer which binds Holliday junction (HJ) DNA. The HJ becomes 2-fold symmetrical on binding to RuvC with unstacked arms; it has a different conformation from HJ DNA in complex with RuvA. In the full resolvosome a probable DNA-RuvA(4)-RuvB(12)-RuvC(2) complex forms which resolves the HJ. Requires Mg(2+) as cofactor.

The protein localises to the cytoplasm. It catalyses the reaction Endonucleolytic cleavage at a junction such as a reciprocal single-stranded crossover between two homologous DNA duplexes (Holliday junction).. The RuvA-RuvB-RuvC complex processes Holliday junction (HJ) DNA during genetic recombination and DNA repair. Endonuclease that resolves HJ intermediates. Cleaves cruciform DNA by making single-stranded nicks across the HJ at symmetrical positions within the homologous arms, yielding a 5'-phosphate and a 3'-hydroxyl group; requires a central core of homology in the junction. The consensus cleavage sequence is 5'-(A/T)TT(C/G)-3'. Cleavage occurs on the 3'-side of the TT dinucleotide at the point of strand exchange. HJ branch migration catalyzed by RuvA-RuvB allows RuvC to scan DNA until it finds its consensus sequence, where it cleaves and resolves the cruciform DNA. This is Crossover junction endodeoxyribonuclease RuvC from Haemophilus ducreyi (strain 35000HP / ATCC 700724).